Here is a 514-residue protein sequence, read N- to C-terminus: Membrane-bound lytic murein transglycosylase F (514 aa).

An N-terminal signal peptide occupies residues 1-30 (MLSNNPLITKFRELFTVALVLALLSGCQWQ). Residues 31–271 (DDNLTDLEKI…QLEEKYFGHV (241 aa)) are non-LT domain. The segment at 272–514 (GSFDYVDTRA…KTIEDPGPSQ (243 aa)) is LT domain. Glu-316 is an active-site residue. The segment at 482 to 514 (PVPPRQANVDGSLNNEAAISSAEKTIEDPGPSQ) is disordered. Over residues 490-499 (VDGSLNNEAA) the composition is skewed to polar residues.

The protein in the N-terminal section; belongs to the bacterial solute-binding protein 3 family. This sequence in the C-terminal section; belongs to the transglycosylase Slt family.

The protein resides in the cell outer membrane. It carries out the reaction Exolytic cleavage of the (1-&gt;4)-beta-glycosidic linkage between N-acetylmuramic acid (MurNAc) and N-acetylglucosamine (GlcNAc) residues in peptidoglycan, from either the reducing or the non-reducing ends of the peptidoglycan chains, with concomitant formation of a 1,6-anhydrobond in the MurNAc residue.. Its function is as follows. Murein-degrading enzyme that degrades murein glycan strands and insoluble, high-molecular weight murein sacculi, with the concomitant formation of a 1,6-anhydromuramoyl product. Lytic transglycosylases (LTs) play an integral role in the metabolism of the peptidoglycan (PG) sacculus. Their lytic action creates space within the PG sacculus to allow for its expansion as well as for the insertion of various structures such as secretion systems and flagella. The polypeptide is Membrane-bound lytic murein transglycosylase F (Photobacterium profundum (strain SS9)).